Consider the following 689-residue polypeptide: Glycine--tRNA ligase beta subunit (689 aa).

It belongs to the class-II aminoacyl-tRNA synthetase family. Tetramer of two alpha and two beta subunits.

The protein resides in the cytoplasm. The catalysed reaction is tRNA(Gly) + glycine + ATP = glycyl-tRNA(Gly) + AMP + diphosphate. In Lacticaseibacillus casei (strain BL23) (Lactobacillus casei), this protein is Glycine--tRNA ligase beta subunit.